Here is a 424-residue protein sequence, read N- to C-terminus: UPF0229 protein PputGB1_0427 (424 aa).

Residues 81-107 (EFTAGEHIPRPQGGGGGGGGRGKAGNS) form a disordered region. A compositionally biased stretch (gly residues) spans 92–107 (QGGGGGGGGRGKAGNS).

This sequence belongs to the UPF0229 family.

The chain is UPF0229 protein PputGB1_0427 from Pseudomonas putida (strain GB-1).